Here is a 1015-residue protein sequence, read N- to C-terminus: Tolloid-like protein 2 (1015 aa).

Residues 1 to 25 (MPRATALGALVSLLLLLPLPRGAGG) form the signal peptide. 2 disordered regions span residues 24-49 (GGLG…EQQL) and 88-130 (VGAT…TTLL). Residues 26–149 (LGERPDATAD…AKTFSPRVRR (124 aa)) constitute a propeptide that is removed on maturation. Polar residues predominate over residues 103-113 (SESSPDTTAMD). The segment covering 115–125 (GTKEAGKDGRE) has biased composition (basic and acidic residues). A Peptidase M12A domain is found at 149–349 (RATTSRTERI…AQARKLYKCP (201 aa)). N-linked (GlcNAc...) asparagine glycosylation is present at asparagine 171. Disulfide bonds link cysteine 192–cysteine 348, cysteine 212–cysteine 234, cysteine 214–cysteine 215, and cysteine 351–cysteine 377. Histidine 242 is a binding site for Zn(2+). Residue glutamate 243 is part of the active site. Zn(2+) contacts are provided by histidine 246 and histidine 252. 2 consecutive CUB domains span residues 351 to 463 (CGET…YEAT) and 464 to 576 (CGGD…FFKE). Residues asparagine 361 and asparagine 392 are each glycosylated (N-linked (GlcNAc...) asparagine). 12 disulfides stabilise this stretch: cysteine 404–cysteine 426, cysteine 464–cysteine 490, cysteine 517–cysteine 539, cysteine 580–cysteine 592, cysteine 588–cysteine 601, cysteine 603–cysteine 616, cysteine 620–cysteine 646, cysteine 673–cysteine 695, cysteine 736–cysteine 747, cysteine 743–cysteine 756, cysteine 758–cysteine 771, and cysteine 776–cysteine 802. An EGF-like 1; calcium-binding domain is found at 576–617 (EVDECSWPDHGGCEHRCVNTLGSYKCACDPGYELAADKKMCE). Positions 620 to 732 (CGGFITKLNG…RGFRAHFFSD (113 aa)) constitute a CUB 3 domain. N-linked (GlcNAc...) asparagine glycosylation is present at asparagine 628. Residues 732–772 (DKDECAKDNGGCQHECVNTFGSYLCRCRNGYWLHENGHDCK) enclose the EGF-like 2; calcium-binding domain. CUB domains lie at 776-888 (CAHK…HSTE) and 889-1005 (CGGR…YTST). Residue asparagine 805 is glycosylated (N-linked (GlcNAc...) asparagine). 3 disulfides stabilise this stretch: cysteine 829–cysteine 851, cysteine 889–cysteine 919, and cysteine 946–cysteine 968. Arginine 963 and arginine 966 each carry omega-N-methylarginine.

The cofactor is Zn(2+).

The protein resides in the secreted. In terms of biological role, protease which specifically processes pro-lysyl oxidase. Required for the embryonic development. Predominant protease, which in the development, influences dorsal-ventral patterning and skeletogenesis. In Homo sapiens (Human), this protein is Tolloid-like protein 2 (TLL2).